A 557-amino-acid chain; its full sequence is Leucine-rich glioma-inactivated protein 1 (557 aa).

A signal peptide spans 1–34 (MESESIRRMGNACIPLKRIAYFLCLFSVVLLTEG). In terms of domain architecture, LRRNT spans 35 to 72 (KKPAKPKCPAVCTCSKDNALCENARSIPRTVPPDVISL). 3 LRR repeats span residues 92–113 (SLQL…AFIG), 116–137 (HLEY…TFRG), and 140–161 (SLIH…IFKG). In terms of domain architecture, LRRCT spans 173–223 (NSFNCDCKLKWLVEWLGHTNATVEDIYCEGPPEYKKRKINSLSPKDFDCII). N192 carries an N-linked (GlcNAc...) asparagine glycan. EAR repeat units follow at residues 225-267 (EFAK…EWDH), 271-313 (TFRN…KRDG), 317-364 (KFIK…KWNG), 366-415 (GFYS…QWSK), 419-462 (LFIN…KWGG), 464-506 (SFQD…NWDA), and 510-552 (KFVK…KHVI). A glycan (N-linked (GlcNAc...) asparagine) is linked at N277. N-linked (GlcNAc...) asparagine glycosylation is present at N422.

Oligomer. Interacts with KCNA1 within a complex containing KCNA1, KCNA4 and KCNAB1. Can bind to ADAM11 and ADAM23. Part of a complex containing ADAM22, DLG4/PSD95 and CACNG2 (stargazin). Post-translationally, glycosylated. Expressed in brain. High levels found in hippocampus, thalamic nuclei, neocortex, and molecular and granule cell layers of the cerebellum.

Its subcellular location is the secreted. The protein localises to the synapse. The protein resides in the cytoplasm. In terms of biological role, plays a role in suppressing the production of MMP1/3 through the phosphatidylinositol 3-kinase/ERK pathway. Regulates voltage-gated potassium channels assembled from KCNA1, KCNA4 and KCNAB1. It slows down channel inactivation by precluding channel closure mediated by the KCNAB1 subunit. Ligand for ADAM22 that positively regulates synaptic transmission mediated by AMPA-type glutamate receptors. The protein is Leucine-rich glioma-inactivated protein 1 (Lgi1) of Rattus norvegicus (Rat).